Here is a 436-residue protein sequence, read N- to C-terminus: Diaminobutyrate--2-oxoglutarate transaminase (436 aa).

Lysine 269 bears the N6-(pyridoxal phosphate)lysine mark.

The protein belongs to the class-III pyridoxal-phosphate-dependent aminotransferase family. It depends on pyridoxal 5'-phosphate as a cofactor.

It catalyses the reaction L-2,4-diaminobutanoate + 2-oxoglutarate = L-aspartate 4-semialdehyde + L-glutamate. The protein operates within amine and polyamine biosynthesis; ectoine biosynthesis; L-ectoine from L-aspartate 4-semialdehyde: step 1/3. In terms of biological role, catalyzes reversively the conversion of L-aspartate beta-semialdehyde (ASA) to L-2,4-diaminobutyrate (DABA) by transamination with L-glutamate. The chain is Diaminobutyrate--2-oxoglutarate transaminase (ectB) from Nocardia farcinica (strain IFM 10152).